A 187-amino-acid polypeptide reads, in one-letter code: Elongation factor P (187 aa).

This sequence belongs to the elongation factor P family.

It localises to the cytoplasm. It participates in protein biosynthesis; polypeptide chain elongation. Its function is as follows. Involved in peptide bond synthesis. Stimulates efficient translation and peptide-bond synthesis on native or reconstituted 70S ribosomes in vitro. Probably functions indirectly by altering the affinity of the ribosome for aminoacyl-tRNA, thus increasing their reactivity as acceptors for peptidyl transferase. The chain is Elongation factor P from Mycolicibacterium gilvum (strain PYR-GCK) (Mycobacterium gilvum (strain PYR-GCK)).